We begin with the raw amino-acid sequence, 1715 residues long: MGNSESQYTFQGSKNHSNTVTGAKQKPCSLKIRSVHAKDEKSLHGWTHGSSGAGYKSRSLARSCLSHFKNHQPYATRLSGPTCKVSKGTTYSKHRANTPGNDFQGNSGAFLPENGFHYVDRESEESHITSNGHLLTCYGRKESLASTPPGEDHRSPRVLIKTLGKLDGCLRVEFHNGGNPHKGTSEDPSGPVRLLRYSPTLASETCPVRETRRHSAAGSPSSQRPSPTDSRLRSSKGSSLSSESSWYDSPWGNAGEVSEVEGSFLAPSTPDPSLPSSFPPSDTKKPFNQSSSLSSLRELYKDPNLGCRSPSGTCLSSNEYISSQVSLNNRVSFASDMDVPSRVDHRDPLHYSSFTLPCRKSKALTEDAAKKDTLKARMRRFSDWTGSLSRKKRKLQEPRSMEGSEYFDSHSDGLNAEGQVPAQTSSLLWSGGSAQTLPHRSESTHAISVDPLRQNIYENFMRELEMSRSNTEHVETSTETMESSSESVSSLEQLDLLFEKEQGVVRKAGWLFFKPLVTLQKERKLELVARRKWKQYWVTLKGCTLLFYETYGKNSTEQNSAPRCALFAEDSIVQSVPEHPKKEHVFCLSNSCGDVYLFQATSQTDLENWVTAIHSACASLFAKKHGKEDTVRLLKSQTRSLLQKIDMDSKMKKMAELQLSVVSDPKNRKAIENQIRQWEQNLEKFHMDLFRMRCYLASLQGGELPNPKSLLAATSRPSKLALGRLGVLSVSSFHALVCSRDDSTLRKRTLSLTQRGKSKKGIFSSLKGLDTLARKGREKRASITQMFDSSHSHGFLGTQLPQKSTNSNKAHDLHLYGSAVDSALRDSMWEVQTYVHFQDNEGVTVTIKPEHRVEDVLALVCKMRQLEPTHYGLQLRKVVDKSVEWCVPALYEYMQEQVYDEIEVFPLSVYDVQLTKTGDMTDFGFAVTVQVDEHQHLNRIFISDVLPDSLAYGGGLRKGNEITSLNGEPVSDLDIQQMEALFSEKSVGLTLVARPVTTRRTLCASWSDSDLFSRDQKSLPPSPNQSQLLEEFLDNFRKTATSDFSNVPEITTGLKRSQTEGTLDQVPHREKMEQTFLSADQIAELCRDLNNTHTNSMEAPTESHDPPPRPLARHLSDADRLRKVIQELVDTEKSYVKDLSCLFELYLEPLQNETFLTQDEMESLFGSLPEMLEFQKVFLETLEDAISASSDFSVLETPSQFRKLLFSLGGSFLYYADHFKLYSGFCANHIKVQRVLERAKTDKAFKAFLDARNPTKQHSSTLESYLIKPVQRVLKYPLLLKELVSLTDHESEEHYHLTEALKAMEKVASHINEMQKIYEDYGMVFDQLVAEQSGTEKEVTELSMGELLMHSTVSWLNPFLSLGKARKDIELTVFVFKRAVILVYKENCKLKKKLPSNSRPAHNSADLDPFKFRWLIPISALQVRLGNTAGTENNSTWELIHTKSEIEGRPETIFQLCCSDSENKTSIVKVIRSILRENFRRHIKCELPLEKTCKDRLVPLKNRVPVSAKLASSRSLKGLRTSSSSEWPSEPSKGNSLDSDECSLSSGTQSSGCPVAESRRDSKSTELEKDAQEGLAEFPDGLIKESDILSDEDEDFHHPLKQGSPTKDIEIQFQRLKISEESDVHPVGQQPLTESGEQPKLVRGHFCPIKRKANSTKRGRGTLLKAQTRHQSLDSHPETASIDLNLVLEREFSVQSLTSVVNEEGFYETQSHGKS.

Polar residues-rich tracts occupy residues 1–22 (MGNSESQYTFQGSKNHSNTVTG) and 218–229 (GSPSSQRPSPTD). Disordered regions lie at residues 1–27 (MGNSESQYTFQGSKNHSNTVTGAKQKP), 174–249 (FHNG…WYDS), 263–294 (SFLAPSTPDPSLPSSFPPSDTKKPFNQSSSLS), and 385–418 (TGSLSRKKRKLQEPRSMEGSEYFDSHSDGLNAEG). Gly-2 carries the N-myristoyl glycine lipid modification. The segment covering 235-245 (SKGSSLSSESS) has biased composition (low complexity). Over residues 395–411 (LQEPRSMEGSEYFDSHS) the composition is skewed to basic and acidic residues. Residues 504–618 (VVRKAGWLFF…WVTAIHSACA (115 aa)) enclose the PH 1 domain. Positions 665–692 (PKNRKAIENQIRQWEQNLEKFHMDLFRM) form a coiled coil. The 72-residue stretch at 831–902 (VQTYVHFQDN…YMQEQVYDEI (72 aa)) folds into the RBD domain. Residues 911–997 (DVQLTKTGDM…GLTLVARPVT (87 aa)) form the PDZ domain. Residues 1092–1113 (THTNSMEAPTESHDPPPRPLAR) form a disordered region. One can recognise a DH domain in the interval 1120 to 1314 (RLRKVIQELV…EKVASHINEM (195 aa)). The 132-residue stretch at 1347–1478 (LLMHSTVSWL…KVIRSILREN (132 aa)) folds into the PH 2 domain. A disordered region spans residues 1515–1582 (SLKGLRTSSS…EGLAEFPDGL (68 aa)). The segment covering 1522–1532 (SSSSEWPSEPS) has biased composition (low complexity). Polar residues predominate over residues 1533–1552 (KGNSLDSDECSLSSGTQSSG). Basic and acidic residues predominate over residues 1557-1572 (ESRRDSKSTELEKDAQ). Residue Ser-1604 is modified to Phosphoserine. The residue at position 1662 (Thr-1662) is a Phosphothreonine.

Belongs to the TIAM family. In terms of assembly, interacts with MAP1A, MAP1B, PARP1 and YWHAE. Interacts with CD44, PARD3 and MAPK8IP2. Post-translationally, phosphorylated on serine and threonine residues. Phosphorylated on Thr-1662 by Rho-kinase. Its phosphorylation by Rho-kinase inhibits its guanine nucleotide exchange activity, its interaction with MAP1A, MAP1B, PARP1 and YWHAE and reduces its ability to promote neurite growth. Expressed in fetal brain (at protein level). Expressed in the olfactory bulb, cortical plate of the cerebral cortex, caudate putamen, hippocampus, ependymal cells of the lateral surface of the lateral ventricles of the brain. Weakly expressed in heart, lung, liver, skeletal muscle, kidney and testis.

It localises to the cytoplasm. The protein localises to the cell projection. Its subcellular location is the lamellipodium. It is found in the filopodium. The protein resides in the growth cone. It localises to the neuron projection. The protein localises to the perikaryon. Modulates the activity of RHO-like proteins and connects extracellular signals to cytoskeletal activities. Acts as a GDP-dissociation stimulator protein that stimulates the GDP-GTP exchange activity of RHO-like GTPases and activates them. Activates specifically RAC1, but not CDC42 and RHOA. Mediates extracellular laminin signals to activate Rac1, contributing to neurite growth. Involved in lamellipodial formation and advancement of the growth cone of embryonic hippocampal neurons. Promotes migration of neurons in the cerebral cortex. When overexpressed, induces membrane ruffling accompanied by the accumulation of actin filaments along the altered plasma membrane. The protein is Rho guanine nucleotide exchange factor TIAM2 of Mus musculus (Mouse).